The following is a 258-amino-acid chain: Probable pectin methylesterase CGR3 (258 aa).

The Cytoplasmic segment spans residues methionine 1–proline 29. A helical membrane pass occupies residues leucine 30–glycine 50. The Lumenal segment spans residues proline 51–histidine 258. A glycan (N-linked (GlcNAc...) asparagine) is linked at asparagine 171.

The protein belongs to the class I-like SAM-binding methyltransferase superfamily.

It is found in the golgi apparatus membrane. Its function is as follows. Together with CGR2, required for homogalacturonan pectins (HG) methylesterification in the Golgi apparatus prior to integration into cell walls, essential for general growth and development. Promotes petiole elongation. Impacts photosynthesis and respiration efficiency by influencing leaf mesophyll morphology and physiology; pectin methylesterification modulates both expansion and positioning of cells in leaves, probably by changing cell walls plasticity. This chain is Probable pectin methylesterase CGR3, found in Arabidopsis thaliana (Mouse-ear cress).